We begin with the raw amino-acid sequence, 879 residues long: Phosphoinositide 3-kinase regulatory subunit 5 (879 aa).

A heterodimerization region spans residues 23–100 (SGSTDISSNW…APYIPETSDL (78 aa)). Disordered stretches follow at residues 314–345 (SLEDDVTEEDEEVDFEEVDDKDEDGGKSPKQD) and 570–590 (SSSTNAPMTNAESPLKSPSPS). Positions 315-336 (LEDDVTEEDEEVDFEEVDDKDE) are enriched in acidic residues. A compositionally biased stretch (polar residues) spans 570-589 (SSSTNAPMTNAESPLKSPSP). An interaction with beta-gamma G protein dimers region spans residues 651 to 751 (PILADMVLYY…WSNGEKVCTS (101 aa)).

Heterodimer. Interacts with a catalytic subunit and with beta-gamma G protein dimers.

The protein localises to the nucleus. Its subcellular location is the cytoplasm. It localises to the cell membrane. Its activity is regulated as follows. Greatly activated by G gamma proteins. Regulatory subunit of the PI3K gamma complex. Required for recruitment of the catalytic subunit to the plasma membrane via interaction with beta-gamma G protein dimers. Required for G protein-mediated activation of PIK3CG. This is Phosphoinositide 3-kinase regulatory subunit 5 (pik3r5) from Xenopus laevis (African clawed frog).